Reading from the N-terminus, the 307-residue chain is Cilia-and flagella-associated protein 96 (307 aa).

2 disordered regions span residues 73–102 and 218–279; these read YSDPFKQRRQHRMQQSKKNLGKPFLPSSGE and HSQK…GPKT.

Belongs to the CFAP96 family.

It is found in the cytoplasm. The protein resides in the cytoskeleton. Its subcellular location is the microtubule organizing center. It localises to the centrosome. The chain is Cilia-and flagella-associated protein 96 (cfap96.L) from Xenopus laevis (African clawed frog).